A 308-amino-acid polypeptide reads, in one-letter code: Vacuolar lysine transporter YPQ1 (308 aa).

Over Met1–Thr12 the chain is Vacuolar. N-linked (GlcNAc...) asparagine glycosylation occurs at Asn9. The 67-residue stretch at Arg10 to Leu76 folds into the PQ-loop 1 domain. A helical transmembrane segment spans residues Leu13–Ile33. Residues Tyr34 to Gly44 lie on the Cytoplasmic side of the membrane. A helical membrane pass occupies residues Leu45–Val65. Topologically, residues Met66–His68 are vacuolar. Residues Leu69–Gly89 traverse the membrane as a helical segment. The Cytoplasmic segment spans residues Gln90–Asp167. The helical transmembrane segment at Ile168–Val188 threads the bilayer. N-linked (GlcNAc...) asparagine glycosylation is present at Asn189. Topologically, residues Asn189 to Glu205 are vacuolar. A helical transmembrane segment spans residues Leu206–Ser226. Positions Met211–Met274 constitute a PQ-loop 2 domain. The Cytoplasmic portion of the chain corresponds to Arg227–Ser244. A helical transmembrane segment spans residues Phe245–Ile265. Residues Ser266–Ser277 lie on the Vacuolar side of the membrane. The N-linked (GlcNAc...) asparagine glycan is linked to Asn275. The helical transmembrane segment at Trp278–Ile298 threads the bilayer. Residues Tyr299–Asn308 are Cytoplasmic-facing.

It belongs to the laat-1 family.

It localises to the vacuole membrane. Amino acid transporter that moves lysine into the vacuole. May also contribute to low affinity arginine import into the vacuole. Has also been suggested to mediate export of cationic amino acids from the vacuole. May function as an amino acid/proton antiporter. This chain is Vacuolar lysine transporter YPQ1 (YPQ1), found in Saccharomyces cerevisiae (strain ATCC 204508 / S288c) (Baker's yeast).